Here is a 134-residue protein sequence, read N- to C-terminus: Small ribosomal subunit protein uS8c (134 aa).

Belongs to the universal ribosomal protein uS8 family. Part of the 30S ribosomal subunit.

It is found in the plastid. Functionally, one of the primary rRNA binding proteins, it binds directly to 16S rRNA central domain where it helps coordinate assembly of the platform of the 30S subunit. In Cuscuta obtusiflora (Peruvian dodder), this protein is Small ribosomal subunit protein uS8c (rps8).